The sequence spans 292 residues: Small ribosomal subunit protein uS3 (292 aa).

One can recognise a KH type-2 domain in the interval 39–110 (IRLEIMKFLK…KISIKIKEVK (72 aa)). The tract at residues 247 to 268 (KANERQSRAALNKKDGLSKDET) is disordered.

This sequence belongs to the universal ribosomal protein uS3 family. Part of the 30S ribosomal subunit. Forms a tight complex with proteins S10 and S14.

Binds the lower part of the 30S subunit head. Binds mRNA in the 70S ribosome, positioning it for translation. The sequence is that of Small ribosomal subunit protein uS3 from Borrelia garinii subsp. bavariensis (strain ATCC BAA-2496 / DSM 23469 / PBi) (Borreliella bavariensis).